The chain runs to 252 residues: Beta-crystallin B1 (252 aa).

Composition is skewed to low complexity over residues 1 to 15 (MSQA…TVAV) and 24 to 37 (KGAP…SPGT). Positions 1 to 42 (MSQAAKASASATVAVNPGPDTKGKGAPPAGTSPSPGTTLAPT) are disordered. Ser-2 is subject to N-acetylserine. An N-terminal arm region spans residues 2–58 (SQAAKASASATVAVNPGPDTKGKGAPPAGTSPSPGTTLAPTTVPITSAKAAELPPGN). Beta/gamma crystallin 'Greek key' domains are found at residues 59–98 (YRLV…IVSA) and 99–143 (GPWV…RPIK). Residues 144–148 (MDAQE) form a connecting peptide region. Beta/gamma crystallin 'Greek key' domains are found at residues 149–190 (HKIS…KVSS) and 191–233 (GTWV…RRLR). Positions 235 to 252 (KQWHLEGSFPVLATEPPK) are C-terminal arm.

Belongs to the beta/gamma-crystallin family. Homo/heterodimer, or complexes of higher-order. The structure of beta-crystallin oligomers seems to be stabilized through interactions between the N-terminal arms. Specific cleavages in the N-terminal arm occur during lens maturation and give rise to truncated forms, leading to impaired oligomerization and protein insolubilization.

Functionally, crystallins are the dominant structural components of the vertebrate eye lens. This chain is Beta-crystallin B1 (CRYBB1), found in Homo sapiens (Human).